The sequence spans 265 residues: Small ribosomal subunit protein eS1 (265 aa).

The segment at 234 to 256 is disordered; it reads EGSTTTSKGVTSEGGEKVDRVDG. The span at 247 to 256 shows a compositional bias: basic and acidic residues; sequence GGEKVDRVDG.

The protein belongs to the eukaryotic ribosomal protein eS1 family. In terms of assembly, component of the small ribosomal subunit. Mature ribosomes consist of a small (40S) and a large (60S) subunit. The 40S subunit contains about 33 different proteins and 1 molecule of RNA (18S). The 60S subunit contains about 49 different proteins and 3 molecules of RNA (28S, 5.8S and 5S).

It is found in the cytoplasm. This is Small ribosomal subunit protein eS1 from Aplysia californica (California sea hare).